Consider the following 174-residue polypeptide: Adenine phosphoribosyltransferase (174 aa).

The protein belongs to the purine/pyrimidine phosphoribosyltransferase family. Homodimer.

The protein localises to the cytoplasm. The catalysed reaction is AMP + diphosphate = 5-phospho-alpha-D-ribose 1-diphosphate + adenine. Its pathway is purine metabolism; AMP biosynthesis via salvage pathway; AMP from adenine: step 1/1. In terms of biological role, catalyzes a salvage reaction resulting in the formation of AMP, that is energically less costly than de novo synthesis. In Agathobacter rectalis (strain ATCC 33656 / DSM 3377 / JCM 17463 / KCTC 5835 / VPI 0990) (Eubacterium rectale), this protein is Adenine phosphoribosyltransferase.